The following is a 418-amino-acid chain: Zinc finger protein 566 (418 aa).

The 72-residue stretch at 6-77 (VMFSDVSVDF…DRELTRGQWP (72 aa)) folds into the KRAB domain. A C2H2-type 1; degenerate zinc finger spans residues 169–193 (KFCASKEYRKTFRHGSQFATHEIIH). C2H2-type zinc fingers lie at residues 199 to 221 (YECK…QKIH), 227 to 249 (FECK…HRIH), 255 to 277 (YECK…QRIH), 283 to 305 (YECK…QRIH), 311 to 333 (YECK…QRIH), 339 to 361 (YECK…QRIH), and 367 to 389 (YECK…HRIH). Residues Lys314 and Lys328 each participate in a glycyl lysine isopeptide (Lys-Gly) (interchain with G-Cter in SUMO2) cross-link.

The protein belongs to the krueppel C2H2-type zinc-finger protein family.

The protein resides in the nucleus. Its function is as follows. May be involved in transcriptional regulation. The sequence is that of Zinc finger protein 566 (ZNF566) from Homo sapiens (Human).